The primary structure comprises 521 residues: Tubulin-specific chaperone E (521 aa).

Residues 24–68 (GPVPPTAGVWLGVEWDHPERGKHDGSHDGVRYFTCRHPTGGSFVR) form the CAP-Gly domain. LRR repeat units follow at residues 147 to 168 (FVQS…AAIT), 173 to 194 (SLQE…SSLS), 199 to 220 (HLRV…HCAP), 224 to 245 (QVEE…EHVL), 247 to 268 (ALTV…EISH), 271 to 292 (RLER…DVPA), and 301 to 322 (ALKE…NELE). The region spanning 335–377 (NPLLHKEKNLETARQIMIARLGQLELLDMRQILSDERRGAELD) is the LRRCT domain.

This sequence belongs to the TBCE family. In terms of assembly, supercomplex made of cofactors A to E. Cofactors A and D function by capturing and stabilizing tubulin in a quasi-native conformation. Cofactor E binds to the cofactor D-tubulin complex; interaction with cofactor C then causes the release of tubulin polypeptides that are committed to the native state.

It is found in the cytoplasm. The protein localises to the cytoskeleton. Functionally, tubulin-folding protein; involved in the second step of the tubulin folding pathway. This is Tubulin-specific chaperone E (tbce) from Danio rerio (Zebrafish).